Consider the following 495-residue polypeptide: MEFLVKSVRPETLKTATLVLAVGEGRKLGASAKAVDDATGGAISAVLKRGDLAGKVGQTLLLQSLPNLKAERVLLVGAGKERELGDRQYRKLASAVLSTLKGLAGADAALALGDLAVKGRGAHAKARLLVETLADGLYVFDRYKSQKAEPLKLKKLTLLADKADSAAVEQGSKEAQAIANGMALTRDLGNLPPNVCHPTFLGEQAKGLAKEFKSLKVEVLDEKKLRELGMGSFLAVAQGSDQPPRLIILQYNGAKKDQAPHVLVGKGITFDTGGISLKPGLGMDEMKFDMCGAASVFGTFRAVLELQLPINLVGLLACAENMPSGGATRPGDIVTTMSGQTVEILNTDAEGRLVLCDALTYAERFKPQSVIDIATLTGACIVALGSNTSGLMGNNEALVRQLLKAGEFADDRAWQLPLFDEYQEQLDSPFADIANIGGPKAGTITAGCFLSRFAKKYHWAHLDIAGTAWISGGKDKGATGRPVPLLTQYLLERAK.

Mn(2+)-binding residues include Lys266 and Asp271. Lys278 is an active-site residue. Asp289, Asp348, and Glu350 together coordinate Mn(2+). The active site involves Arg352.

The protein belongs to the peptidase M17 family. The cofactor is Mn(2+).

It localises to the cytoplasm. It catalyses the reaction Release of an N-terminal amino acid, Xaa-|-Yaa-, in which Xaa is preferably Leu, but may be other amino acids including Pro although not Arg or Lys, and Yaa may be Pro. Amino acid amides and methyl esters are also readily hydrolyzed, but rates on arylamides are exceedingly low.. The enzyme catalyses Release of an N-terminal amino acid, preferentially leucine, but not glutamic or aspartic acids.. Functionally, presumably involved in the processing and regular turnover of intracellular proteins. Catalyzes the removal of unsubstituted N-terminal amino acids from various peptides. The protein is Probable cytosol aminopeptidase of Pseudomonas aeruginosa (strain UCBPP-PA14).